Here is a 497-residue protein sequence, read N- to C-terminus: Sperm motility kinase Z (497 aa).

The 248-residue stretch at 28-275 (YTVLKTLSQH…AQDLLSHPWL (248 aa)) folds into the Protein kinase domain. Residues 34–42 (LSQHGTTEV) and Lys57 each bind ATP. Asp146 acts as the Proton acceptor in catalysis. In terms of domain architecture, UBA spans 292-332 (FPDPDIMAAMKNIGFHVQDIRESLKHRKFDETMATYNLLRA). Disordered regions lie at residues 383–410 (TEEHQLRQTGGTNAPFPPKKTPTMGRSQ) and 439–460 (SSQAEKTSSDPEKSETSTSCPL).

The protein belongs to the protein kinase superfamily. CAMK Ser/Thr protein kinase family. Smok subfamily.

It carries out the reaction L-seryl-[protein] + ATP = O-phospho-L-seryl-[protein] + ADP + H(+). It catalyses the reaction L-threonyl-[protein] + ATP = O-phospho-L-threonyl-[protein] + ADP + H(+). Its function is as follows. May play a role in sperm motility, especially in the regulation of flagellar function. In Mus musculus (Mouse), this protein is Sperm motility kinase Z (Gm4922).